Reading from the N-terminus, the 269-residue chain is Phosphoribosylformylglycinamidine synthase subunit PurQ (269 aa).

In terms of domain architecture, Glutamine amidotransferase type-1 spans 5–262 (VLVMSGYGIN…IESNLQIFKN (258 aa)). The Nucleophile role is filled by Cys95. Residues His222, Glu224, and Glu232 contribute to the active site.

In terms of assembly, part of the FGAM synthase complex composed of 1 PurL, 1 PurQ and 2 PurS subunits.

Its subcellular location is the cytoplasm. It carries out the reaction N(2)-formyl-N(1)-(5-phospho-beta-D-ribosyl)glycinamide + L-glutamine + ATP + H2O = 2-formamido-N(1)-(5-O-phospho-beta-D-ribosyl)acetamidine + L-glutamate + ADP + phosphate + H(+). It catalyses the reaction L-glutamine + H2O = L-glutamate + NH4(+). The protein operates within purine metabolism; IMP biosynthesis via de novo pathway; 5-amino-1-(5-phospho-D-ribosyl)imidazole from N(2)-formyl-N(1)-(5-phospho-D-ribosyl)glycinamide: step 1/2. Part of the phosphoribosylformylglycinamidine synthase complex involved in the purines biosynthetic pathway. Catalyzes the ATP-dependent conversion of formylglycinamide ribonucleotide (FGAR) and glutamine to yield formylglycinamidine ribonucleotide (FGAM) and glutamate. The FGAM synthase complex is composed of three subunits. PurQ produces an ammonia molecule by converting glutamine to glutamate. PurL transfers the ammonia molecule to FGAR to form FGAM in an ATP-dependent manner. PurS interacts with PurQ and PurL and is thought to assist in the transfer of the ammonia molecule from PurQ to PurL. In Methanococcus maripaludis (strain C5 / ATCC BAA-1333), this protein is Phosphoribosylformylglycinamidine synthase subunit PurQ.